The primary structure comprises 329 residues: Holliday junction branch migration complex subunit RuvB (329 aa).

The segment at 1–181 (MNELLHQHKA…FGIPLHLEFY (181 aa)) is large ATPase domain (RuvB-L). 9 residues coordinate ATP: leucine 20, arginine 21, glycine 62, lysine 65, threonine 66, threonine 67, arginine 171, tyrosine 181, and arginine 218. Threonine 66 provides a ligand contact to Mg(2+). Residues 182–252 (SVEELMLVIK…FADSALFNLG (71 aa)) are small ATPAse domain (RuvB-S). Residues 255 to 329 (KSGLDKMDIK…IEHLMNYKYI (75 aa)) form a head domain (RuvB-H) region. Positions 308 and 313 each coordinate DNA.

Belongs to the RuvB family. In terms of assembly, homohexamer. Forms an RuvA(8)-RuvB(12)-Holliday junction (HJ) complex. HJ DNA is sandwiched between 2 RuvA tetramers; dsDNA enters through RuvA and exits via RuvB. An RuvB hexamer assembles on each DNA strand where it exits the tetramer. Each RuvB hexamer is contacted by two RuvA subunits (via domain III) on 2 adjacent RuvB subunits; this complex drives branch migration. In the full resolvosome a probable DNA-RuvA(4)-RuvB(12)-RuvC(2) complex forms which resolves the HJ.

The protein resides in the cytoplasm. The catalysed reaction is ATP + H2O = ADP + phosphate + H(+). The RuvA-RuvB-RuvC complex processes Holliday junction (HJ) DNA during genetic recombination and DNA repair, while the RuvA-RuvB complex plays an important role in the rescue of blocked DNA replication forks via replication fork reversal (RFR). RuvA specifically binds to HJ cruciform DNA, conferring on it an open structure. The RuvB hexamer acts as an ATP-dependent pump, pulling dsDNA into and through the RuvAB complex. RuvB forms 2 homohexamers on either side of HJ DNA bound by 1 or 2 RuvA tetramers; 4 subunits per hexamer contact DNA at a time. Coordinated motions by a converter formed by DNA-disengaged RuvB subunits stimulates ATP hydrolysis and nucleotide exchange. Immobilization of the converter enables RuvB to convert the ATP-contained energy into a lever motion, pulling 2 nucleotides of DNA out of the RuvA tetramer per ATP hydrolyzed, thus driving DNA branch migration. The RuvB motors rotate together with the DNA substrate, which together with the progressing nucleotide cycle form the mechanistic basis for DNA recombination by continuous HJ branch migration. Branch migration allows RuvC to scan DNA until it finds its consensus sequence, where it cleaves and resolves cruciform DNA. The chain is Holliday junction branch migration complex subunit RuvB from Anaplasma phagocytophilum (strain HZ).